A 386-amino-acid polypeptide reads, in one-letter code: 8-amino-7-oxononanoate synthase (386 aa).

A substrate-binding site is contributed by arginine 26. Residue glycine 104–tyrosine 105 coordinates pyridoxal 5'-phosphate. A substrate-binding site is contributed by histidine 129. Positions 176, 204, and 232 each coordinate pyridoxal 5'-phosphate. An N6-(pyridoxal phosphate)lysine modification is found at lysine 235. Threonine 349 lines the substrate pocket.

It belongs to the class-II pyridoxal-phosphate-dependent aminotransferase family. BioF subfamily. In terms of assembly, homodimer. It depends on pyridoxal 5'-phosphate as a cofactor.

It carries out the reaction 6-carboxyhexanoyl-[ACP] + L-alanine + H(+) = (8S)-8-amino-7-oxononanoate + holo-[ACP] + CO2. Its pathway is cofactor biosynthesis; biotin biosynthesis. Its function is as follows. Catalyzes the decarboxylative condensation of pimeloyl-[acyl-carrier protein] and L-alanine to produce 8-amino-7-oxononanoate (AON), [acyl-carrier protein], and carbon dioxide. This Chromohalobacter salexigens (strain ATCC BAA-138 / DSM 3043 / CIP 106854 / NCIMB 13768 / 1H11) protein is 8-amino-7-oxononanoate synthase.